The sequence spans 58 residues: Small ribosomal subunit protein bS21 (58 aa).

Residues 32–42 (IRKREHYEKPS) show a composition bias toward basic and acidic residues. The interval 32 to 58 (IRKREHYEKPSVKRKKKSEAARKRKFK) is disordered. Positions 43–58 (VKRKKKSEAARKRKFK) are enriched in basic residues.

The protein belongs to the bacterial ribosomal protein bS21 family.

The polypeptide is Small ribosomal subunit protein bS21 (Lachnoclostridium phytofermentans (strain ATCC 700394 / DSM 18823 / ISDg) (Clostridium phytofermentans)).